We begin with the raw amino-acid sequence, 84 residues long: Small ribosomal subunit protein uS17 (84 aa).

It belongs to the universal ribosomal protein uS17 family. Part of the 30S ribosomal subunit.

One of the primary rRNA binding proteins, it binds specifically to the 5'-end of 16S ribosomal RNA. This chain is Small ribosomal subunit protein uS17, found in Salmonella typhi.